The chain runs to 619 residues: Chaperone protein HscA homolog (619 aa).

Belongs to the heat shock protein 70 family.

Chaperone involved in the maturation of iron-sulfur cluster-containing proteins. Has a low intrinsic ATPase activity which is markedly stimulated by HscB. This Azotobacter vinelandii protein is Chaperone protein HscA homolog.